A 606-amino-acid polypeptide reads, in one-letter code: MNMFSSCMITALVILTLPIIMSSTKLYKNKLYPYYVKTATSYAFMISMIPTMMFIYSGQETIFSNWHWMTIQTMKLSMSFKLNYFSMIFVPVALFVTWSIMEFSMWYMHSDPYINRFFKYLLLFLITMMVLVTANNMFQLFIGWEGVGIMSFLLIGWWYGRTDANTAALQAVLYNRIGDVGFIMTMAWFLLNLNTWDLQQIFITTNDNFNLPLLGLLLAATGKSAQFGLHPWLPSAMEGPTPVSALLHSSTMVVAGVFLLIRFHPLMEHNQTIQTLTLCLGAITTLFTAICALTQNDIKEIVSFSTSSQLGLMMVTIGINQPYLAFLHICTHAFCKAMLFMCSGSVIHSLNDEQDIRKMGGLFKVLPFTTTSLIIGSLALTGMPFLTGFYSKDLIIESANTSNTNAWALLITLVATSLTAAYSTRIMFFALLGQPRFSPMILINENNPLLINSIKRLLIGSVFAGYIISHSITPTTIPQMTMPHYLKMTALAVTILGFILALELNLTTQGLKFNYPSNYFKFSSLLGYYPTIMHRLTPKTSLTISQKSASMLLDSIWLENILPKSISYFQMKSSTLISNQKGLIKLYFLSFMLTMILSLLILNYHE.

Helical transmembrane passes span 1–21 (MNMF…PIIM), 43–63 (AFMI…ETIF), 87–107 (MIFV…SMWY), 117–137 (FFKY…ANNM), 140–160 (LFIG…WWYG), 171–191 (AVLY…WFLL), 201–221 (IFIT…LAAT), 241–261 (TPVS…FLLI), 273–293 (IQTL…ICAL), 310–330 (LGLM…LHIC), 365–385 (VLPF…GMPF), 409–429 (LLIT…IMFF), 457–477 (LLIG…PTTI), 488–508 (MTAL…NLTT), and 582–602 (GLIK…LLIL).

This sequence belongs to the complex I subunit 5 family. Core subunit of respiratory chain NADH dehydrogenase (Complex I) which is composed of 45 different subunits.

The protein localises to the mitochondrion inner membrane. It carries out the reaction a ubiquinone + NADH + 5 H(+)(in) = a ubiquinol + NAD(+) + 4 H(+)(out). Its function is as follows. Core subunit of the mitochondrial membrane respiratory chain NADH dehydrogenase (Complex I) which catalyzes electron transfer from NADH through the respiratory chain, using ubiquinone as an electron acceptor. Essential for the catalytic activity and assembly of complex I. This chain is NADH-ubiquinone oxidoreductase chain 5 (MT-ND5), found in Canis lupus familiaris (Dog).